The chain runs to 196 residues: Ribonuclease HII (196 aa).

The region spanning 9–196 is the RNase H type-2 domain; sequence SLIAGVDEVG…APVKRAIGLK (188 aa). The a divalent metal cation site is built by Asp-15, Glu-16, and Asp-107.

It belongs to the RNase HII family. Mn(2+) serves as cofactor. It depends on Mg(2+) as a cofactor.

Its subcellular location is the cytoplasm. It catalyses the reaction Endonucleolytic cleavage to 5'-phosphomonoester.. In terms of biological role, endonuclease that specifically degrades the RNA of RNA-DNA hybrids. The chain is Ribonuclease HII from Photorhabdus laumondii subsp. laumondii (strain DSM 15139 / CIP 105565 / TT01) (Photorhabdus luminescens subsp. laumondii).